Reading from the N-terminus, the 453-residue chain is GTPase Der (453 aa).

EngA-type G domains are found at residues 4–169 and 178–353; these read PVVA…PPTD and INVA…EQHR. GTP is bound by residues 10–17, 57–61, 120–123, 184–191, 231–235, and 296–299; these read GRPNVGKS, DTGGL, NKCE, DTAGI, and NKWD. The KH-like domain maps to 354 to 439; sequence RRVSTSVINE…PIRLLWRGKK (86 aa).

Belongs to the TRAFAC class TrmE-Era-EngA-EngB-Septin-like GTPase superfamily. EngA (Der) GTPase family. Associates with the 50S ribosomal subunit.

Its function is as follows. GTPase that plays an essential role in the late steps of ribosome biogenesis. The protein is GTPase Der of Cyanothece sp. (strain PCC 7425 / ATCC 29141).